Consider the following 239-residue polypeptide: Small ribosomal subunit protein uS2c (239 aa).

The protein belongs to the universal ribosomal protein uS2 family.

It is found in the plastid. It localises to the organellar chromatophore. The sequence is that of Small ribosomal subunit protein uS2c (rps2) from Paulinella chromatophora.